Reading from the N-terminus, the 96-residue chain is Large ribosomal subunit protein eL30 (96 aa).

It belongs to the eukaryotic ribosomal protein eL30 family.

This chain is Large ribosomal subunit protein eL30, found in Methanosphaerula palustris (strain ATCC BAA-1556 / DSM 19958 / E1-9c).